The sequence spans 739 residues: MSGFPFGQSNSVGGFSFGSSSATNSSSASSTTSPLSFSFNQSSNPSSTGFGFGSSVSSTPASSTTPSFGFGASSTPSFGFGSSASSSTPSFGFGSSASVTPASTTPSFGFGTAASSSAPAPSLFGSSTTNASSAAPGSSPFGFVTSSASSTATPSSSLFGAPASSAATPSSSPFGAAPASGSTPLFGSSPSLFSAPSSASASNSSLFGASSSAATSTSPLFGAPSSATGATPSFSVASSAPGSSSSIFGATGSSPSFSVASSASGSSPSIFGATGSSPFFGSSSSAGSTPSLFASSSSGATTSSPSPFGVSTFNSSSTSNTSNASASPFSASTGFSFLKSTASSTTSSTTPSAPPQTASSSSSFSFGTSANSGFNLSTGSSAAPASSTSGAVFSIATTTTTSSSTPAATSAPASSAPASTMAFPSFGVTSSATNTTPASSAATFSTTGFGLASSTPATGSTNSFTGFAVPKTSTPASSSQPQTTSPAFSFSLPSSTSTTAPATSSATTTQTTLVVPSSSGTSTAVAPVAGSPKLPSEITGKTVEEIIKEWNTELQERTGRFRKQANAIAEWDKRILQNRDVLLRLEIEVAKVVETQSSLERQLELIETHQQEVDKALQSMEEEAERIYNDERKSLLDDEAASTRDAMYEQSELVERELEHMTEQIRSIIQSVNANQGGELEAIDGMSPLDVVVRILNNQLSSLMWIDEKAEEFSSRIQKIALQGSGGDRELMAPKHWMS.

Repeat copies occupy residues 6–7 (FG), 17–18 (FG), 50–51 (FG), 52–53 (FG), 68–69 (FG), 70–71 (FG), 78–79 (FG), 80–81 (FG), 91–92 (FG), 93–94 (FG), 108–109 (FG), 110–111 (FG), 124–125 (FG), 141–142 (FG), 159–160 (FG), 174–175 (FG), 186–187 (FG), 207–208 (FG), and 221–222 (FG). The tract at residues 6–450 (FGQSNSVGGF…AATFSTTGFG (445 aa)) is 26 X 2 AA repeats of F-G. Residues 18–67 (GSSSATNSSSASSTTSPLSFSFNQSSNPSSTGFGFGSSVSSTPASSTTPS) form a disordered region. A compositionally biased stretch (low complexity) spans 79–218 (GFGSSASSST…ASSSAATSTS (140 aa)). Positions 79-245 (GFGSSASSST…VASSAPGSSS (167 aa)) are disordered. A compositionally biased stretch (low complexity) spans 232–245 (PSFSVASSAPGSSS). Repeat copies occupy residues 248–249 (FG), 271–272 (FG), 280–281 (FG), 308–309 (FG), and 366–367 (FG). Disordered stretches follow at residues 281 to 329 (GSSS…ASPF), 341 to 366 (TASS…SFSF), and 399 to 418 (TTTS…SAPA). Repeat copies occupy residues 426–427 (FG) and 449–450 (FG). Positions 471–533 (KTSTPASSSQ…AVAPVAGSPK (63 aa)) are disordered. The segment covering 472–519 (TSTPASSSQPQTTSPAFSFSLPSSTSTTAPATSSATTTQTTLVVPSSS) has biased composition (low complexity). Residues 584-674 (RLEIEVAKVV…IRSIIQSVNA (91 aa)) are a coiled coil.

Belongs to the nucleoporin NSP1/NUP62 family. Part of the nuclear pore complex (NPC). The NPC has an eight-fold symmetrical structure comprising a central transport channel and two rings, the cytoplasmic and nuclear rings, to which eight filaments are attached. The cytoplasmic filaments have loose ends, while the nuclear filaments are joined in a distal ring, forming a nuclear basket. NPCs are highly dynamic in configuration and composition, and can be devided in 3 subcomplexes, the NUP62 subcomplex, the NUP107-160 subcomplex and the NUP93 subcomplex, containing approximately 30 different nucleoporin proteins. Interacts with NUP58 and the importin KPNB1.

It localises to the nucleus envelope. The protein resides in the nucleus. It is found in the nuclear pore complex. The chain is Nuclear pore complex protein NUP62 from Arabidopsis thaliana (Mouse-ear cress).